The following is a 312-amino-acid chain: Glyoxylate/hydroxypyruvate reductase A (312 aa).

The active site involves Arg-227. His-275 serves as the catalytic Proton donor.

It belongs to the D-isomer specific 2-hydroxyacid dehydrogenase family. GhrA subfamily.

It is found in the cytoplasm. It carries out the reaction glycolate + NADP(+) = glyoxylate + NADPH + H(+). The enzyme catalyses (R)-glycerate + NAD(+) = 3-hydroxypyruvate + NADH + H(+). The catalysed reaction is (R)-glycerate + NADP(+) = 3-hydroxypyruvate + NADPH + H(+). Its function is as follows. Catalyzes the NADPH-dependent reduction of glyoxylate and hydroxypyruvate into glycolate and glycerate, respectively. The sequence is that of Glyoxylate/hydroxypyruvate reductase A from Escherichia coli O157:H7.